The sequence spans 105 residues: Large ribosomal subunit protein uL24 (105 aa).

It belongs to the universal ribosomal protein uL24 family. In terms of assembly, part of the 50S ribosomal subunit.

Functionally, one of two assembly initiator proteins, it binds directly to the 5'-end of the 23S rRNA, where it nucleates assembly of the 50S subunit. One of the proteins that surrounds the polypeptide exit tunnel on the outside of the subunit. The sequence is that of Large ribosomal subunit protein uL24 from Vibrio campbellii (strain ATCC BAA-1116).